The primary structure comprises 98 residues: Integration host factor subunit alpha (98 aa).

The interval 49–70 (FGNFDLRDKNQRPGRNPKTGED) is disordered.

This sequence belongs to the bacterial histone-like protein family. In terms of assembly, heterodimer of an alpha and a beta chain.

This protein is one of the two subunits of integration host factor, a specific DNA-binding protein that functions in genetic recombination as well as in transcriptional and translational control. The protein is Integration host factor subunit alpha of Serratia proteamaculans (strain 568).